Consider the following 289-residue polypeptide: Serine/threonine-protein phosphatase Pgam5, mitochondrial (289 aa).

The chain crosses the membrane as a helical span at residues 7–23 (FVCGTGAGLAVYYLQRL).

It belongs to the phosphoglycerate mutase family. BPG-dependent PGAM subfamily. Interacts with Pk92B/ASK1.

Its subcellular location is the mitochondrion outer membrane. It carries out the reaction O-phospho-L-seryl-[protein] + H2O = L-seryl-[protein] + phosphate. The enzyme catalyses O-phospho-L-threonyl-[protein] + H2O = L-threonyl-[protein] + phosphate. Displays phosphatase activity for serine/threonine residues, and dephosphorylates and activates Pk92B kinase. Has apparently no phosphoglycerate mutase activity. The polypeptide is Serine/threonine-protein phosphatase Pgam5, mitochondrial (Drosophila erecta (Fruit fly)).